The following is a 165-amino-acid chain: Phosphopantetheine adenylyltransferase (165 aa).

Position 11 (T11) interacts with substrate. Residues T11–F12 and H19 each bind ATP. Substrate-binding residues include K43, V75, and R89. ATP contacts are provided by residues G90–R92, E100, and Y125–T131.

Belongs to the bacterial CoaD family. In terms of assembly, homohexamer. Mg(2+) serves as cofactor.

Its subcellular location is the cytoplasm. The catalysed reaction is (R)-4'-phosphopantetheine + ATP + H(+) = 3'-dephospho-CoA + diphosphate. The protein operates within cofactor biosynthesis; coenzyme A biosynthesis; CoA from (R)-pantothenate: step 4/5. Functionally, reversibly transfers an adenylyl group from ATP to 4'-phosphopantetheine, yielding dephospho-CoA (dPCoA) and pyrophosphate. This is Phosphopantetheine adenylyltransferase from Acidovorax ebreus (strain TPSY) (Diaphorobacter sp. (strain TPSY)).